We begin with the raw amino-acid sequence, 265 residues long: Proteasome subunit alpha (265 aa).

Positions 236–265 (EKDSKGSKGAQNPKGARDSKNSKSYGESTD) are disordered.

The protein belongs to the peptidase T1A family. As to quaternary structure, the 20S proteasome core is composed of 14 alpha and 14 beta subunits that assemble into four stacked heptameric rings, resulting in a barrel-shaped structure. The two inner rings, each composed of seven catalytic beta subunits, are sandwiched by two outer rings, each composed of seven alpha subunits. The catalytic chamber with the active sites is on the inside of the barrel. Has a gated structure, the ends of the cylinder being occluded by the N-termini of the alpha-subunits. Is capped by the proteasome-associated ATPase, ARC.

Its subcellular location is the cytoplasm. It participates in protein degradation; proteasomal Pup-dependent pathway. The formation of the proteasomal ATPase ARC-20S proteasome complex, likely via the docking of the C-termini of ARC into the intersubunit pockets in the alpha-rings, may trigger opening of the gate for substrate entry. Interconversion between the open-gate and close-gate conformations leads to a dynamic regulation of the 20S proteasome proteolysis activity. Functionally, component of the proteasome core, a large protease complex with broad specificity involved in protein degradation. In Mycobacterium leprae (strain Br4923), this protein is Proteasome subunit alpha.